A 365-amino-acid chain; its full sequence is MLGILLYCRPGFENDCANELQDKATALEVFGFVKTKRNSGYVFYQCYDPQQVEYLLEKLDYKQLIFARQLIAVKAFINDLPLDDRISPILEITRNLPLGGDLYVETPEGDDTKPLLTFCRKFTVPLRQALRKHNSLTAKENRNKIFYHLCFLDNKSAYIGFSVPHNRSEFYMGIPRLRSPSEAPSRSTLKLDEAIQVFLTAEEQQERLHSGMRAVDLGACPGGWTYQLVRRGLFVTAIDNGAMAQSLMDTGQVTHYTVDGFKYEPERKNIDWLVCDMIEKPKRVAKLMGQWLIDGWCKEAIFNFKLPMKKRYQEASEDIKILTDMFEKEDLQYELQAKQLYHDREEITLHVRLIGNHWGKQLGNG.

S-adenosyl-L-methionine contacts are provided by residues S187, 220–223 (CPGG), D239, D259, and D276. The Proton acceptor role is filled by K305.

It belongs to the class I-like SAM-binding methyltransferase superfamily. RNA methyltransferase RlmE family. RlmM subfamily. Monomer.

It localises to the cytoplasm. It carries out the reaction cytidine(2498) in 23S rRNA + S-adenosyl-L-methionine = 2'-O-methylcytidine(2498) in 23S rRNA + S-adenosyl-L-homocysteine + H(+). Catalyzes the 2'-O-methylation at nucleotide C2498 in 23S rRNA. The chain is Ribosomal RNA large subunit methyltransferase M from Psychromonas ingrahamii (strain DSM 17664 / CCUG 51855 / 37).